The primary structure comprises 230 residues: Ribonuclease 3 (230 aa).

Residues 19 to 134 (ELLTIALTHR…LLGAIYLEHG (116 aa)) enclose the RNase III domain. Glutamate 44 provides a ligand contact to Mg(2+). Aspartate 48 is a catalytic residue. Mg(2+) is bound by residues aspartate 120 and glutamate 123. One can recognise a DRBM domain in the interval 161–229 (DWKSSLQELT…AASAYKTLDE (69 aa)).

It belongs to the ribonuclease III family. Homodimer. Requires Mg(2+) as cofactor.

The protein localises to the cytoplasm. The catalysed reaction is Endonucleolytic cleavage to 5'-phosphomonoester.. In terms of biological role, digests double-stranded RNA. Involved in the processing of primary rRNA transcript to yield the immediate precursors to the all rRNAs (23S, 16S and 5S). Processes some mRNAs, and tRNAs when they are encoded in the rRNA operon. Processes pre-crRNA and tracrRNA of type II CRISPR loci if present in the organism. The protein is Ribonuclease 3 (rnc) of Mycolicibacterium smegmatis (strain ATCC 700084 / mc(2)155) (Mycobacterium smegmatis).